The following is a 500-amino-acid chain: Probable malate:quinone oxidoreductase (500 aa).

This sequence belongs to the MQO family. FAD is required as a cofactor.

The catalysed reaction is (S)-malate + a quinone = a quinol + oxaloacetate. It functions in the pathway carbohydrate metabolism; tricarboxylic acid cycle; oxaloacetate from (S)-malate (quinone route): step 1/1. The polypeptide is Probable malate:quinone oxidoreductase (Bacillus anthracis (strain A0248)).